Consider the following 267-residue polypeptide: Undecaprenyl-diphosphatase (267 aa).

Helical transmembrane passes span 39-59 (QGLA…ILYF), 87-107 (WMIA…KDFI), 111-131 (LRSA…LWWV), 149-169 (ALFI…RSGA), 189-209 (FLMS…KLVT), 218-238 (ALSI…HAFL), and 244-264 (VGMM…IAFL).

This sequence belongs to the UppP family.

It is found in the cell inner membrane. It catalyses the reaction di-trans,octa-cis-undecaprenyl diphosphate + H2O = di-trans,octa-cis-undecaprenyl phosphate + phosphate + H(+). Functionally, catalyzes the dephosphorylation of undecaprenyl diphosphate (UPP). Confers resistance to bacitracin. The protein is Undecaprenyl-diphosphatase of Photobacterium profundum (strain SS9).